Consider the following 118-residue polypeptide: NADH-quinone oxidoreductase subunit A 2 (118 aa).

A run of 3 helical transmembrane segments spans residues 5–25, 62–82, and 87–107; these read YLPI…SVIF, LIAM…PWAV, and LGMF…VGYV.

Belongs to the complex I subunit 3 family. NDH-1 is composed of 14 different subunits. Subunits NuoA, H, J, K, L, M, N constitute the membrane sector of the complex.

It localises to the cell inner membrane. It catalyses the reaction a quinone + NADH + 5 H(+)(in) = a quinol + NAD(+) + 4 H(+)(out). NDH-1 shuttles electrons from NADH, via FMN and iron-sulfur (Fe-S) centers, to quinones in the respiratory chain. The immediate electron acceptor for the enzyme in this species is believed to be ubiquinone. Couples the redox reaction to proton translocation (for every two electrons transferred, four hydrogen ions are translocated across the cytoplasmic membrane), and thus conserves the redox energy in a proton gradient. In Citrifermentans bemidjiense (strain ATCC BAA-1014 / DSM 16622 / JCM 12645 / Bem) (Geobacter bemidjiensis), this protein is NADH-quinone oxidoreductase subunit A 2.